The primary structure comprises 244 residues: Lytic polysaccharide monooxygenase-like protein ANIA_04702 (244 aa).

Positions 1-23 (MLMSTSPSPWLAAAMLCIGLANA) are cleaved as a signal peptide. Cu(2+) is bound at residue His-24. At His-24 the chain carries Methylhistidine. Residues Asn-57, Asn-80, Asn-118, Asn-159, Asn-192, and Asn-198 are each glycosylated (N-linked (GlcNAc...) asparagine). Intrachain disulfides connect Cys-72–Cys-177 and Cys-142–Cys-196. The GPI-anchor amidated asparagine moiety is linked to residue Asn-215. Positions 216 to 244 (AGLEAVTVPSFLTAVVPTFLGIAYGLLMA) are cleaved as a propeptide — removed in mature form.

The protein belongs to the X325 family. The cofactor is Cu(2+). The catalytically essential N-terminal histidine His-24 is post-translationally modified by methylation to prevent protonation of the histidine side chain, and protect the critical active site of the enzyme from oxidative damage.

It is found in the cell membrane. Lytic polysaccharide monooxygenase-like protein that has diverged to biological functions other than polysaccharide degradation since it does not perform oxidative cleavage of polysaccharides. Acts as a cell surface-bound protein that functions in the copper-accumulation pathway. May also act as the major cell wall sensor that regulates MAP kinase-dependent hyphal anastomosis, the fusion of hyphal cells. The chain is Lytic polysaccharide monooxygenase-like protein ANIA_04702 from Emericella nidulans (strain FGSC A4 / ATCC 38163 / CBS 112.46 / NRRL 194 / M139) (Aspergillus nidulans).